A 332-amino-acid chain; its full sequence is Melanocortin receptor 4 (332 aa).

Topologically, residues 1-43 (MVNSTHRGMHASLHLWNRSSHRLHSNASESLGKGYSDGGCYEQ) are extracellular. Asn-3, Asn-17, and Asn-26 each carry an N-linked (GlcNAc...) asparagine glycan. 2 disulfides stabilise this stretch: Cys-40–Cys-279 and Cys-271–Cys-277. Residues 44–69 (LFVSPEVFVTLGVISLLENILVIVAI) traverse the membrane as a helical segment. Residues 70 to 81 (AKNKNLHSPMYF) lie on the Cytoplasmic side of the membrane. Residues 82–106 (FICSLAVADMLVSVSNGSETIVITL) traverse the membrane as a helical segment. Positions 100, 122, and 126 each coordinate Ca(2+). Topologically, residues 107–123 (LNSTDTDTQSFTVNIDN) are extracellular. A helical membrane pass occupies residues 124 to 145 (VIDSVICSSLLASICSLLSIAV). Residues 146–165 (DRYFTIFYALQYHNIMTVKR) lie on the Cytoplasmic side of the membrane. A helical membrane pass occupies residues 166 to 186 (VRIIISCIWAACTVSGILFII). The Extracellular portion of the chain corresponds to 187 to 191 (YSDSS). A helical transmembrane segment spans residues 192–215 (AVIICLITMFFTMLALMASLYVHM). The Cytoplasmic portion of the chain corresponds to 216–248 (FLMARLHIKRIAVLPGTGAIRQGANMKGAITLT). Residues 249–271 (ILIGVFVVCWAPFFLHLIFYISC) form a helical membrane-spanning segment. At 272-280 (PQNPYCVCF) the chain is on the extracellular side. A helical transmembrane segment spans residues 281 to 304 (MSHFNLYLILIMCNSVIDPLIYAL). Topologically, residues 305–332 (RSQELRKTFKEIICCYPLGGLCDLSSRY) are cytoplasmic. Cys-318 carries the S-palmitoyl cysteine lipid modification.

This sequence belongs to the G-protein coupled receptor 1 family. Homodimer; disulfide-linked, also forms higher order oligomers. Interacts with GNAS. Interacts with ATRNL1. Interacts with MGRN1; this interaction competes with GNAS-binding and thus inhibits agonist-induced cAMP production. Interacts with MRAP and MRAP2; these associated factors increase ligand-sensitivity and generation of cAMP.

The protein localises to the cell membrane. Functionally, hormone receptor that acts as a key component of the leptin-melanocortin pathway at the intersection of homeostatic maintenance of energetic state. Plays a role in regulating food intake: activation by a stimulating hormone such as anorexigenic alpha-melanocyte stimulating hormone (alpha-MSH) inhibits appetite, whereas binding to a natural antagonist like Agouti-related protein/AGRP promotes appetite. G-protein-coupled receptor that activates conventional Galphas signaling leading to induction of anorexogenic signaling in the hypothalamus to result in negative energy balance. Regulates the firing activity of neurons from the hypothalamus by alpha-MSH and AGRP independently of Galphas signaling by ligand-induced coupling of closure of inwardly rectifying potassium channel KCNJ13. In intestinal epithelial cells, plays a role in the inhibition of hepatic glucose production via nesfatin-1/NUCB2 leading to increased cyclic adenosine monophosphate (cAMP) levels and glucagon-like peptide 1 (GLP-1) secretion in the intestinal epithelium. The protein is Melanocortin receptor 4 (MC4R) of Macaca fascicularis (Crab-eating macaque).